The primary structure comprises 598 residues: Aspartate--tRNA(Asp/Asn) ligase (598 aa).

Glu-177 serves as a coordination point for L-aspartate. The segment at 201-204 is aspartate; it reads QLFK. Arg-223 serves as a coordination point for L-aspartate. Residues 223–225 and Gln-232 contribute to the ATP site; that span reads RDE. His-456 lines the L-aspartate pocket. Residue Glu-493 participates in ATP binding. An L-aspartate-binding site is contributed by Arg-500. 545–548 is a binding site for ATP; that stretch reads GLDR.

This sequence belongs to the class-II aminoacyl-tRNA synthetase family. Type 1 subfamily. As to quaternary structure, homodimer.

It localises to the cytoplasm. The enzyme catalyses tRNA(Asx) + L-aspartate + ATP = L-aspartyl-tRNA(Asx) + AMP + diphosphate. Its function is as follows. Aspartyl-tRNA synthetase with relaxed tRNA specificity since it is able to aspartylate not only its cognate tRNA(Asp) but also tRNA(Asn). Reaction proceeds in two steps: L-aspartate is first activated by ATP to form Asp-AMP and then transferred to the acceptor end of tRNA(Asp/Asn). This Prochlorococcus marinus (strain MIT 9301) protein is Aspartate--tRNA(Asp/Asn) ligase.